The chain runs to 132 residues: Agouti-signaling protein (132 aa).

The signal sequence occupies residues Met1–Ser22. Residue Asn39 is glycosylated (N-linked (GlcNAc...) asparagine). The segment covering Glu61–Met79 has biased composition (basic and acidic residues). The tract at residues Glu61–Thr87 is disordered. 5 disulfides stabilise this stretch: Cys93–Cys108, Cys100–Cys114, Cys107–Cys125, Cys111–Cys132, and Cys116–Cys123. Residues Cys93–Cys132 form the Agouti domain.

It is found in the secreted. Its function is as follows. Involved in the regulation of melanogenesis. The binding of ASP to MC1R precludes alpha-MSH initiated signaling and thus blocks production of cAMP, leading to a down-regulation of eumelanogenesis (brown/black pigment) and thus increasing synthesis of pheomelanin (yellow/red pigment). The protein is Agouti-signaling protein (ASIP) of Macaca fascicularis (Crab-eating macaque).